The following is a 222-amino-acid chain: Superoxide dismutase [Mn], mitochondrial (222 aa).

The N-terminal 24 residues, 1-24 (MLCRAACSTSRKLVPALGSLGSRQ), are a transit peptide targeting the mitochondrion. His50 provides a ligand contact to Mn(2+). Tyr58 carries the 3'-nitrotyrosine modification. N6-acetyllysine; alternate occurs at positions 68 and 75. An N6-succinyllysine; alternate mark is found at Lys68 and Lys75. His98 serves as a coordination point for Mn(2+). Residue Lys114 is modified to N6-acetyllysine. N6-acetyllysine; alternate occurs at positions 122 and 130. N6-succinyllysine; alternate is present on residues Lys122 and Lys130. Mn(2+) contacts are provided by Asp183 and His187. An N6-acetyllysine modification is found at Lys202.

The protein belongs to the iron/manganese superoxide dismutase family. In terms of assembly, homotetramer. Requires Mn(2+) as cofactor. Nitrated under oxidative stress. Nitration coupled with oxidation inhibits the catalytic activity. Post-translationally, acetylation at Lys-122 decreases enzymatic activity. Deacetylated by SIRT3 upon exposure to ionizing radiations or after long fasting. In terms of processing, polyubiquitinated; leading to proteasomal degradation. Deubiquitinated by USP36 which increases protein stability.

The protein resides in the mitochondrion matrix. It carries out the reaction 2 superoxide + 2 H(+) = H2O2 + O2. Functionally, destroys superoxide anion radicals which are normally produced within the cells and which are toxic to biological systems. This chain is Superoxide dismutase [Mn], mitochondrial (SOD2), found in Equus caballus (Horse).